Consider the following 133-residue polypeptide: Putative pre-16S rRNA nuclease (133 aa).

This sequence belongs to the YqgF nuclease family.

The protein resides in the cytoplasm. In terms of biological role, could be a nuclease involved in processing of the 5'-end of pre-16S rRNA. This chain is Putative pre-16S rRNA nuclease, found in Alcanivorax borkumensis (strain ATCC 700651 / DSM 11573 / NCIMB 13689 / SK2).